A 412-amino-acid chain; its full sequence is Type II methyltransferase M.Sau3AI (412 aa).

In terms of domain architecture, SAM-dependent MTase C5-type spans 4 to 402 (IKVVELFAGV…NQIEKIDSIT (399 aa)). Residue C85 is part of the active site.

It belongs to the class I-like SAM-binding methyltransferase superfamily. C5-methyltransferase family.

It carries out the reaction a 2'-deoxycytidine in DNA + S-adenosyl-L-methionine = a 5-methyl-2'-deoxycytidine in DNA + S-adenosyl-L-homocysteine + H(+). A methylase that recognizes the double-stranded sequence 5'-GATC-3', methylates C-4 on both strands and protects the DNA from cleavage by the Sau3AI endonuclease. The chain is Type II methyltransferase M.Sau3AI (sau3AIM) from Staphylococcus aureus.